The following is a 506-amino-acid chain: PHD finger protein 10 (506 aa).

Disordered regions lie at residues 1–66 and 293–377; these read MAAV…QDFG and DPEL…SVSG. Over residues 23–35 the composition is skewed to basic and acidic residues; it reads VKEDNSNDTKDPE. Positions 52 to 66 are enriched in polar residues; that stretch reads GDSTPSCENSNQDFG. Residues 90–299 are SAY; that stretch reads MLQEQVSEYL…DPLDPELLAL (210 aa). Low complexity predominate over residues 326 to 338; the sequence is SIDSSSMNMSESD. Positions 353–367 are enriched in basic and acidic residues; sequence KVKEKSSTPRKEGSK. The segment at 387–444 adopts a PHD-type 1; degenerate zinc-finger fold; the sequence is ICGICLKGKDANKKGRSERLIHCSQCDNSGHPSCLDMSAELVAVIKKYPWQCMECKTC. A PHD-type 2; degenerate zinc finger spans residues 446 to 489; that stretch reads ICGQPHHEEEMMFCDTCDRGYHTFCVGLGALPSGRWICDCCQKV.

It belongs to the SAYP family. In terms of assembly, component of neural progenitors-specific chromatin remodeling complex (npBAF complex), a subfamily of ATP-dependent SWI/SNF chromatin remodeling complexes.

The protein localises to the nucleus. Functionally, involved in transcription activity regulation by chromatin remodeling in the context of the neural progenitors-specific chromatin remodeling complex (npBAF complex). May play a role in the proliferation of neural progenitors. In Xenopus laevis (African clawed frog), this protein is PHD finger protein 10 (phf10).